Consider the following 231-residue polypeptide: Small ribosomal subunit protein bS18c (231 aa).

Disordered regions lie at residues 1–31 and 95–231; these read MEKSERPLIKKKRPFRKKKRSFRKRRSPIES and QKEE…TRKK. Over residues 9-26 the composition is skewed to basic residues; it reads IKKKRPFRKKKRSFRKRR. Basic and acidic residues-rich tracts occupy residues 95–151, 159–169, and 212–231; these read QKEE…EFQR, TNEKQTNEKQT, and TNEKQTKSNDRTTDLRTRKK.

It belongs to the bacterial ribosomal protein bS18 family. In terms of assembly, part of the 30S ribosomal subunit.

It localises to the plastid. The protein resides in the chloroplast. This chain is Small ribosomal subunit protein bS18c, found in Jasminum nudiflorum (Winter jasmine).